The following is a 456-amino-acid chain: Adenylosuccinate synthetase (456 aa).

Residues 11 to 17 (GDEGKGG) and 39 to 41 (GHT) each bind GTP. The active-site Proton acceptor is Asp12. Residues Asp12 and Gly39 each coordinate Mg(2+). Residues 12–15 (DEGK), 37–40 (NAGH), Thr127, Arg141, Gln232, Thr247, and Arg328 contribute to the IMP site. Catalysis depends on His40, which acts as the Proton donor. 324–330 (TVTGRPR) contacts substrate. Residues Arg330, 356-358 (HLD), and 441-443 (GVG) each bind GTP.

It belongs to the adenylosuccinate synthetase family. In terms of assembly, homodimer. Requires Mg(2+) as cofactor.

The protein resides in the cytoplasm. The catalysed reaction is IMP + L-aspartate + GTP = N(6)-(1,2-dicarboxyethyl)-AMP + GDP + phosphate + 2 H(+). It functions in the pathway purine metabolism; AMP biosynthesis via de novo pathway; AMP from IMP: step 1/2. Its function is as follows. Plays an important role in the de novo pathway of purine nucleotide biosynthesis. Catalyzes the first committed step in the biosynthesis of AMP from IMP. The sequence is that of Adenylosuccinate synthetase from Natronomonas pharaonis (strain ATCC 35678 / DSM 2160 / CIP 103997 / JCM 8858 / NBRC 14720 / NCIMB 2260 / Gabara) (Halobacterium pharaonis).